Consider the following 76-residue polypeptide: Putative defensin-like protein 121 (76 aa).

A signal peptide spans 1-26 (MTYKATILAIFMIILVLGIGTKETRG). Cystine bridges form between cysteine 30-cysteine 74, cysteine 39-cysteine 59, cysteine 44-cysteine 68, and cysteine 48-cysteine 70.

It belongs to the DEFL family.

Its subcellular location is the secreted. This is Putative defensin-like protein 121 (LCR55) from Arabidopsis thaliana (Mouse-ear cress).